A 294-amino-acid chain; its full sequence is MNDALKTYLNGICWFLLSLVTSSINDVMSKYLGTRLHSFEVAFFRFFFSSIVLLPFVVYYGKNALKTSRPFVHVLRGLLLFFGMTSWTYGLTIAPVTTATVVSFAIPLFTLILAVFILNENIIWQRWVVTVVGFIGLVVMLKPHTKDFNPEILYLILAAISFAMLDIINKKFVVKESMLSMLFYSAIVTAMVSLPVAMQYWITPSSFELALLFVLGSSGSFILFFLLKAFSIVDATATAPYRYLELVISAIAAYFIFNEFPDKSTVHGAVIIIPATLFIIYSEKKSMSSKHESQ.

10 helical membrane passes run 4–24, 41–61, 74–91, 98–118, 121–141, 148–168, 178–198, 207–227, 237–257, and 260–280; these read ALKT…TSSI, VAFF…VYYG, VLRG…TYGL, TATV…VFIL, NIIW…VVML, FNPE…LDII, MLSM…PVAM, FELA…FFLL, ATAP…YFIF, and FPDK…LFII. 2 consecutive EamA domains span residues 22–141 and 160–280; these read SSIN…VVML and ISFA…LFII.

It belongs to the drug/metabolite transporter (DMT) superfamily. 10 TMS drug/metabolite exporter (DME) (TC 2.A.7.3) family.

It localises to the cell inner membrane. Its activity is regulated as follows. Transport is inhibited by S-adenosylethionine and to a lesser extent by S-adenosylhomocysteine. Unlike eukaryotic transporters is not inhibited by sinfungin. Also inhibited by 2.4-dinitrophenol, suggesting transport is an energy-dependent process. Transports S-adenosylmethionine. This is S-adenosylmethionine uptake transporter (sam) from Rickettsia prowazekii (strain Madrid E).